The primary structure comprises 386 residues: Succinyl-diaminopimelate desuccinylase (386 aa).

H75 contacts Zn(2+). The active site involves D77. Position 108 (D108) interacts with Zn(2+). E138 serves as the catalytic Proton acceptor. The Zn(2+) site is built by E139, E167, and H356.

This sequence belongs to the peptidase M20A family. DapE subfamily. In terms of assembly, homodimer. It depends on Zn(2+) as a cofactor. Co(2+) is required as a cofactor.

It catalyses the reaction N-succinyl-(2S,6S)-2,6-diaminopimelate + H2O = (2S,6S)-2,6-diaminopimelate + succinate. Its pathway is amino-acid biosynthesis; L-lysine biosynthesis via DAP pathway; LL-2,6-diaminopimelate from (S)-tetrahydrodipicolinate (succinylase route): step 3/3. Catalyzes the hydrolysis of N-succinyl-L,L-diaminopimelic acid (SDAP), forming succinate and LL-2,6-diaminopimelate (DAP), an intermediate involved in the bacterial biosynthesis of lysine and meso-diaminopimelic acid, an essential component of bacterial cell walls. This chain is Succinyl-diaminopimelate desuccinylase, found in Caulobacter vibrioides (strain ATCC 19089 / CIP 103742 / CB 15) (Caulobacter crescentus).